We begin with the raw amino-acid sequence, 256 residues long: Imidazole glycerol phosphate synthase subunit HisF (256 aa).

Active-site residues include Asp-11 and Asp-130.

This sequence belongs to the HisA/HisF family. Heterodimer of HisH and HisF.

It localises to the cytoplasm. It catalyses the reaction 5-[(5-phospho-1-deoxy-D-ribulos-1-ylimino)methylamino]-1-(5-phospho-beta-D-ribosyl)imidazole-4-carboxamide + L-glutamine = D-erythro-1-(imidazol-4-yl)glycerol 3-phosphate + 5-amino-1-(5-phospho-beta-D-ribosyl)imidazole-4-carboxamide + L-glutamate + H(+). It functions in the pathway amino-acid biosynthesis; L-histidine biosynthesis; L-histidine from 5-phospho-alpha-D-ribose 1-diphosphate: step 5/9. Its function is as follows. IGPS catalyzes the conversion of PRFAR and glutamine to IGP, AICAR and glutamate. The HisF subunit catalyzes the cyclization activity that produces IGP and AICAR from PRFAR using the ammonia provided by the HisH subunit. This chain is Imidazole glycerol phosphate synthase subunit HisF, found in Thioalkalivibrio sulfidiphilus (strain HL-EbGR7).